The following is a 170-amino-acid chain: Putative pre-16S rRNA nuclease (170 aa).

Residues 1–29 (MVAASHRSPDRPGDPEGLEPGTGRGRRLG) form a disordered region.

This sequence belongs to the YqgF nuclease family.

It localises to the cytoplasm. Could be a nuclease involved in processing of the 5'-end of pre-16S rRNA. This is Putative pre-16S rRNA nuclease from Mycobacterium ulcerans (strain Agy99).